A 314-amino-acid chain; its full sequence is Coproporphyrin III ferrochelatase (314 aa).

2 residues coordinate Fe(2+): H186 and E268.

Belongs to the ferrochelatase family.

The protein localises to the cytoplasm. The enzyme catalyses Fe-coproporphyrin III + 2 H(+) = coproporphyrin III + Fe(2+). It participates in porphyrin-containing compound metabolism; protoheme biosynthesis. Functionally, involved in coproporphyrin-dependent heme b biosynthesis. Catalyzes the insertion of ferrous iron into coproporphyrin III to form Fe-coproporphyrin III. This chain is Coproporphyrin III ferrochelatase, found in Lactococcus lactis subsp. lactis (strain IL1403) (Streptococcus lactis).